Reading from the N-terminus, the 537-residue chain is Ribonuclease Y (537 aa).

A helical membrane pass occupies residues 4 to 24; sequence FPIIMSVFAAIIGLVIGYVSV. Residues 112–148 form a disordered region; sequence ASTLDRKDDNLSNKEKALEQKEQSLSDKSKHIDAREE. A KH domain is found at 227-287; that stretch reads TNSTVHLPDD…IRREIARMTM (61 aa). The 94-residue stretch at 353-446 folds into the HD domain; the sequence is VLRHSIEVAK…VAAADALSAA (94 aa).

It belongs to the RNase Y family.

It is found in the cell membrane. Endoribonuclease that initiates mRNA decay. This Streptococcus sanguinis (strain SK36) protein is Ribonuclease Y.